The sequence spans 170 residues: Adenine phosphoribosyltransferase (170 aa).

Belongs to the purine/pyrimidine phosphoribosyltransferase family. Homodimer.

Its subcellular location is the cytoplasm. The catalysed reaction is AMP + diphosphate = 5-phospho-alpha-D-ribose 1-diphosphate + adenine. It participates in purine metabolism; AMP biosynthesis via salvage pathway; AMP from adenine: step 1/1. Functionally, catalyzes a salvage reaction resulting in the formation of AMP, that is energically less costly than de novo synthesis. This chain is Adenine phosphoribosyltransferase, found in Streptococcus suis (strain 98HAH33).